Reading from the N-terminus, the 440-residue chain is Transposon Ty1-OL Gag polyprotein (440 aa).

Composition is skewed to polar residues over residues 1 to 23 (MESQ…SVTS), 48 to 60 (TKAN…TPAS), and 127 to 152 (QSQF…GNTF). Disordered regions lie at residues 1 to 93 (MESQ…MMTQ), 126 to 173 (PQSQ…RPPP), and 352 to 440 (GSRN…PGTY). The span at 153–165 (TDSSSADSDMTST) shows a compositional bias: low complexity. The tract at residues 299–401 (NNGIHINNKV…NSKSKTARAH (103 aa)) is RNA-binding. Low complexity predominate over residues 402 to 418 (NVSTSNNSPSTDNDSIS). S416 bears the Phosphoserine mark. Polar residues predominate over residues 419-428 (KSTTEPIQLN). Positions 429–440 (NKHDLHLRPGTY) are enriched in basic and acidic residues.

As to quaternary structure, homotrimer.

The protein resides in the cytoplasm. In terms of biological role, capsid protein (CA) is the structural component of the virus-like particle (VLP), forming the shell that encapsulates the retrotransposons dimeric RNA genome. The particles are assembled from trimer-clustered units and there are holes in the capsid shells that allow for the diffusion of macromolecules. CA also has nucleocapsid-like chaperone activity, promoting primer tRNA(i)-Met annealing to the multipartite primer-binding site (PBS), dimerization of Ty1 RNA and initiation of reverse transcription. The protein is Transposon Ty1-OL Gag polyprotein (TY1A-OL) of Saccharomyces cerevisiae (strain ATCC 204508 / S288c) (Baker's yeast).